Consider the following 228-residue polypeptide: PKHD-type hydroxylase XAC2942 (228 aa).

A Fe2OG dioxygenase domain is found at 78-180 (RIYPPLFNRY…RVACFFWAQS (103 aa)). H96, D98, and H161 together coordinate Fe cation. Residue R171 coordinates 2-oxoglutarate.

Fe(2+) serves as cofactor. Requires L-ascorbate as cofactor.

The chain is PKHD-type hydroxylase XAC2942 from Xanthomonas axonopodis pv. citri (strain 306).